A 573-amino-acid polypeptide reads, in one-letter code: AP-4 complex accessory subunit Tepsin (573 aa).

The 134-residue stretch at 8 to 141 (RDRLSFLHRL…FSDAVPQPPS (134 aa)) folds into the ENTH domain. Disordered regions lie at residues 136 to 155 (VPQP…MGAQ) and 194 to 311 (NAVR…NDCQ). Positions 137-150 (PQPPSQPPQIPPPA) are enriched in pro residues. Polar residues predominate over residues 217–229 (PAVTPSASHTHPN). The segment covering 260–293 (SSPSSQNSSCTSNLSRASDSGSRSGSDSHSGTSR) has biased composition (low complexity). Residues 294–303 (EPGDLAERAE) are compositionally biased toward basic and acidic residues. Residue Ser400 is modified to Phosphoserine. The tract at residues 497-526 (CSSEQGTESEQRLENTDTPEDSSSPLPWSP) is disordered. The segment at 526-536 (PNSLFAGMELV) is interaction with AP4B1. The interval 563 to 573 (SEPSAFAFLNM) is interaction with AP4E1.

As to quaternary structure, interacts with AP4B1 and AP4E1; the interaction is direct and mediates the association of TEPSIN with the adapter-like complex 4 (AP-4), a heterotetramer composed of AP4B1, AP4E1, AP4M1 and AP4S1.

It localises to the golgi apparatus. The protein resides in the trans-Golgi network membrane. Its subcellular location is the cytoplasmic vesicle. It is found in the cytoplasm. The protein localises to the cytosol. Associates with the adapter-like complex 4 (AP-4) and may therefore play a role in vesicular trafficking of proteins at the trans-Golgi network. The sequence is that of AP-4 complex accessory subunit Tepsin from Mus musculus (Mouse).